We begin with the raw amino-acid sequence, 112 residues long: uncharacterized protein (112 aa).

The next 2 helical transmembrane spans lie at 55 to 75 (LLEI…PTLF) and 91 to 111 (LIML…LLLL).

The protein resides in the membrane. This is an uncharacterized protein from Saccharomyces cerevisiae (strain ATCC 204508 / S288c) (Baker's yeast).